The sequence spans 428 residues: 3-phosphoshikimate 1-carboxyvinyltransferase (428 aa).

3-phosphoshikimate contacts are provided by Lys-22, Ser-23, and Arg-27. Lys-22 provides a ligand contact to phosphoenolpyruvate. Phosphoenolpyruvate-binding residues include Gly-96 and Arg-124. Positions 170, 171, 172, 198, 314, 337, and 341 each coordinate 3-phosphoshikimate. Gln-172 serves as a coordination point for phosphoenolpyruvate. Asp-314 acts as the Proton acceptor in catalysis. Phosphoenolpyruvate is bound by residues Arg-345, Arg-387, and Lys-412.

This sequence belongs to the EPSP synthase family. In terms of assembly, monomer.

Its subcellular location is the cytoplasm. It catalyses the reaction 3-phosphoshikimate + phosphoenolpyruvate = 5-O-(1-carboxyvinyl)-3-phosphoshikimate + phosphate. The protein operates within metabolic intermediate biosynthesis; chorismate biosynthesis; chorismate from D-erythrose 4-phosphate and phosphoenolpyruvate: step 6/7. Its function is as follows. Catalyzes the transfer of the enolpyruvyl moiety of phosphoenolpyruvate (PEP) to the 5-hydroxyl of shikimate-3-phosphate (S3P) to produce enolpyruvyl shikimate-3-phosphate and inorganic phosphate. The sequence is that of 3-phosphoshikimate 1-carboxyvinyltransferase from Photobacterium profundum (strain SS9).